The sequence spans 450 residues: Tubulin alpha-1 chain (450 aa).

Q11 serves as a coordination point for GTP. K40 carries the N6-acetyllysine modification. GTP is bound by residues E71, S140, G144, T145, T179, N206, and N228. E71 lines the Mg(2+) pocket. E254 is a catalytic residue.

The protein belongs to the tubulin family. Dimer of alpha and beta chains. A typical microtubule is a hollow water-filled tube with an outer diameter of 25 nm and an inner diameter of 15 nM. Alpha-beta heterodimers associate head-to-tail to form protofilaments running lengthwise along the microtubule wall with the beta-tubulin subunit facing the microtubule plus end conferring a structural polarity. Microtubules usually have 13 protofilaments but different protofilament numbers can be found in some organisms and specialized cells. Interacts with Ote. Mg(2+) is required as a cofactor. Post-translationally, undergoes a tyrosination/detyrosination cycle, the cyclic removal and re-addition of a C-terminal tyrosine residue by the enzymes tubulin tyrosine carboxypeptidase (TTCP) and tubulin tyrosine ligase (TTL), respectively. In terms of processing, acetylation of alpha chains at Lys-40 stabilizes microtubules and affects affinity and processivity of microtubule motors. This modification has a role in multiple cellular functions, ranging from cell motility, cell cycle progression or cell differentiation to intracellular trafficking and signaling. During the early stages of oogenesis lky/Alpha-tubulin N-acetyltransferase 2 is the main acetyltransferase responsible for Lys-40 acetylation in germline cells while Atat/alpha-tubulin N-acetyltransferase 1 is the main acetyltransferase responsible for Lys-40 acetylation in somatic cells.

It localises to the cytoplasm. It is found in the cytoskeleton. It carries out the reaction GTP + H2O = GDP + phosphate + H(+). In terms of biological role, tubulin is the major constituent of microtubules, a cylinder consisting of laterally associated linear protofilaments composed of alpha- and beta-tubulin heterodimers. Microtubules grow by the addition of GTP-tubulin dimers to the microtubule end, where a stabilizing cap forms. Below the cap, tubulin dimers are in GDP-bound state, owing to GTPase activity of alpha-tubulin. This is Tubulin alpha-1 chain (alphaTub84B) from Drosophila melanogaster (Fruit fly).